The following is a 415-amino-acid chain: Probable peptidoglycan glycosyltransferase FtsW (415 aa).

The next 11 helical transmembrane spans lie at 31 to 51, 63 to 83, 97 to 117, 133 to 153, 162 to 182, 185 to 205, 206 to 226, 245 to 265, 285 to 305, 326 to 346, and 361 to 381; these read PILM…VTSA, FFFV…TVWL, LWIL…GIGH, IQVS…YIAT, ITGM…LLLQ, FGTT…ARAQ, WQMM…VVLS, FGHG…GVWG, FIFA…LIGL, IAGA…ALIN, and LPLM…LGFL.

Belongs to the SEDS family. FtsW subfamily.

It is found in the cell inner membrane. It catalyses the reaction [GlcNAc-(1-&gt;4)-Mur2Ac(oyl-L-Ala-gamma-D-Glu-L-Lys-D-Ala-D-Ala)](n)-di-trans,octa-cis-undecaprenyl diphosphate + beta-D-GlcNAc-(1-&gt;4)-Mur2Ac(oyl-L-Ala-gamma-D-Glu-L-Lys-D-Ala-D-Ala)-di-trans,octa-cis-undecaprenyl diphosphate = [GlcNAc-(1-&gt;4)-Mur2Ac(oyl-L-Ala-gamma-D-Glu-L-Lys-D-Ala-D-Ala)](n+1)-di-trans,octa-cis-undecaprenyl diphosphate + di-trans,octa-cis-undecaprenyl diphosphate + H(+). It participates in cell wall biogenesis; peptidoglycan biosynthesis. Its function is as follows. Peptidoglycan polymerase that is essential for cell division. This is Probable peptidoglycan glycosyltransferase FtsW from Halothiobacillus neapolitanus (strain ATCC 23641 / c2) (Thiobacillus neapolitanus).